Consider the following 312-residue polypeptide: Putative 1-aminocyclopropane-1-carboxylate deaminase (312 aa).

At lysine 42 the chain carries N6-(pyridoxal phosphate)lysine.

Belongs to the ACC deaminase/D-cysteine desulfhydrase family. Requires pyridoxal 5'-phosphate as cofactor.

It carries out the reaction 1-aminocyclopropane-1-carboxylate + H2O = 2-oxobutanoate + NH4(+). The protein is Putative 1-aminocyclopropane-1-carboxylate deaminase of Thermotoga maritima (strain ATCC 43589 / DSM 3109 / JCM 10099 / NBRC 100826 / MSB8).